A 92-amino-acid polypeptide reads, in one-letter code: MALVRSIFSAKKILGGSLARTSKAPKGFLAVYVGENQEKKQRYFVPVSYLKQPSFQALLSKCEEEFGFDHPMGGLTICCPEYTFISITSRIQ.

It belongs to the ARG7 family. In terms of tissue distribution, higher expression in thermo-responsive cultivars (e.g. cv. Alst-1, cv. Ang-0 and cv. Com-0) than in low thermo-responsive cultivars (e.g. cv. Dja-1, cv. El-0 and cv. Kon).

It localises to the cell membrane. Functions as a positive effector of cell expansion through modulation of auxin transport. Involved in thermo-responsiveness of plant architecture. Enhances plasma membrane H(+)-ATPase. This is Auxin-responsive protein SAUR28 from Arabidopsis thaliana (Mouse-ear cress).